Consider the following 456-residue polypeptide: Chaperone protein dnaJ GFA2, mitochondrial (456 aa).

The N-terminal 89 residues, 1-89 (MVPSNGAKVL…RSFHGTGSSF (89 aa)), are a transit peptide targeting the mitochondrion. In terms of domain architecture, J spans 94 to 159 (DYYSVLGVSK…EKRDLYDQVG (66 aa)). The CR-type zinc finger occupies 225 to 303 (GCSKTVTFQT…CRGARVVRGQ (79 aa)). C238, C241, C255, C258, C277, C280, C291, and C294 together coordinate Zn(2+). 4 CXXCXGXG motif repeats span residues 238-245 (CNTCGGQG), 255-262 (CKACNGSG), 277-284 (CQKCGGAG), and 291-298 (CKSCRGAR).

It belongs to the DnaJ family. As to expression, widely expressed.

The protein resides in the mitochondrion. Functionally, chaperone that may play a role in mitochondrial protein folding. Involved in female gametophyte development. Required for cell death of the synergid cells during fertilization process, and fusion of the polar nuclei during megagametogenesis. This Arabidopsis thaliana (Mouse-ear cress) protein is Chaperone protein dnaJ GFA2, mitochondrial.